The primary structure comprises 220 residues: 3-keto-L-gulonate-6-phosphate decarboxylase SgbH (220 aa).

Residue Asp-11 participates in substrate binding. Mg(2+) contacts are provided by Glu-33 and Asp-62. Residue Arg-192 coordinates substrate.

It belongs to the HPS/KGPDC family. KGPDC subfamily. Homodimer. It depends on Mg(2+) as a cofactor.

It catalyses the reaction 3-dehydro-L-gulonate 6-phosphate + H(+) = L-xylulose 5-phosphate + CO2. Its function is as follows. Catalyzes the decarboxylation of 3-keto-L-gulonate-6-P into L-xylulose-5-P. May be involved in the utilization of 2,3-diketo-L-gulonate. The chain is 3-keto-L-gulonate-6-phosphate decarboxylase SgbH (sgbH) from Escherichia coli (strain K12).